Consider the following 213-residue polypeptide: MMIRDLGKLEFEAALAIQEQLAAGVAAGTSPETLLLLEHPPVYTIGRGGCRENVLDPGIRVVEANRGGDVTFHGPGQLVGYPVIDLGRRGRDLHRYLRILEELLINVAAEFGVAARREPGRTGIWTDGGKLASIGVGVRRWVTMHGFALNVTNELAPFRSINPCGIVACPITSLSAILGRPVPLGDVRRSVAGRFPFLLDERLPFLETAEPAP.

Residues 28 to 203 (GTSPETLLLL…RFPFLLDERL (176 aa)) enclose the BPL/LPL catalytic domain. Residues 66-73 (RGGDVTFH), 133-135 (SIG), and 146-148 (GFA) each bind substrate. Catalysis depends on Cys164, which acts as the Acyl-thioester intermediate.

This sequence belongs to the LipB family.

Its subcellular location is the cytoplasm. The catalysed reaction is octanoyl-[ACP] + L-lysyl-[protein] = N(6)-octanoyl-L-lysyl-[protein] + holo-[ACP] + H(+). It functions in the pathway protein modification; protein lipoylation via endogenous pathway; protein N(6)-(lipoyl)lysine from octanoyl-[acyl-carrier-protein]: step 1/2. Functionally, catalyzes the transfer of endogenously produced octanoic acid from octanoyl-acyl-carrier-protein onto the lipoyl domains of lipoate-dependent enzymes. Lipoyl-ACP can also act as a substrate although octanoyl-ACP is likely to be the physiological substrate. The chain is Octanoyltransferase from Geobacter metallireducens (strain ATCC 53774 / DSM 7210 / GS-15).